Here is a 532-residue protein sequence, read N- to C-terminus: Bifunctional purine biosynthesis protein PurH (532 aa).

The MGS-like domain occupies 1–147; that stretch reads MAKIKRALIS…KNYRSVTVVT (147 aa).

This sequence belongs to the PurH family.

It carries out the reaction (6R)-10-formyltetrahydrofolate + 5-amino-1-(5-phospho-beta-D-ribosyl)imidazole-4-carboxamide = 5-formamido-1-(5-phospho-D-ribosyl)imidazole-4-carboxamide + (6S)-5,6,7,8-tetrahydrofolate. The enzyme catalyses IMP + H2O = 5-formamido-1-(5-phospho-D-ribosyl)imidazole-4-carboxamide. The protein operates within purine metabolism; IMP biosynthesis via de novo pathway; 5-formamido-1-(5-phospho-D-ribosyl)imidazole-4-carboxamide from 5-amino-1-(5-phospho-D-ribosyl)imidazole-4-carboxamide (10-formyl THF route): step 1/1. Its pathway is purine metabolism; IMP biosynthesis via de novo pathway; IMP from 5-formamido-1-(5-phospho-D-ribosyl)imidazole-4-carboxamide: step 1/1. The polypeptide is Bifunctional purine biosynthesis protein PurH (Magnetococcus marinus (strain ATCC BAA-1437 / JCM 17883 / MC-1)).